Reading from the N-terminus, the 258-residue chain is Glucanase inhibitor protein 1 (258 aa).

An N-terminal signal peptide occupies residues 1–19 (MRVVPTLAAASLALGAVAG). The Peptidase S1 domain maps to 27 to 254 (ILGGGEVPIG…AIEWITSVTK (228 aa)). Cysteine 54 and cysteine 70 are joined by a disulfide. N-linked (GlcNAc...) asparagine glycans are attached at residues asparagine 87, asparagine 102, asparagine 107, asparagine 157, and asparagine 185. Intrachain disulfides connect cysteine 177–cysteine 189 and cysteine 199–cysteine 230.

Belongs to the peptidase S1 family. Forms an apoplastic complex with host endoglucanases in tomato leaves during P.infestans infection.

It is found in the secreted. Its function is as follows. Secreted effector that suppresses host plant glucan elicitor-mediated defense responses. Targets host endoglucanases and inhibits the endoglucanase-mediated release of elicitor-active glucan oligosaccharides from P.infestans cell walls. The polypeptide is Glucanase inhibitor protein 1 (Phytophthora infestans (Potato late blight agent)).